Reading from the N-terminus, the 176-residue chain is Disulfide bond formation protein B (176 aa).

The Cytoplasmic segment spans residues 1 to 14 (MMRSLNRCSKHRAA). Residues 15 to 31 (WLLLALTTFSLELVALY) traverse the membrane as a helical segment. Residues 32-49 (FQHVMLLKPCVLCVYQRC) lie on the Periplasmic side of the membrane. C41 and C44 are disulfide-bonded. Residues 50 to 65 (ALYGVVAAGLVGAIAP) traverse the membrane as a helical segment. Topologically, residues 66–71 (ATPLRF) are cytoplasmic. The chain crosses the membrane as a helical span at residues 72–89 (SGLAIWLYSAWEGLQLAM). The Periplasmic segment spans residues 90–144 (KHTDIQLHPSPFVTCDFFVSFPAWLPLDKWLPSVFSASGDCAVRQWHFLSLEMPQ). A disulfide bridge connects residues C104 and C130. A helical membrane pass occupies residues 145–163 (WMIVIFGAYLAVAVLILLA). The Cytoplasmic segment spans residues 164–176 (QFFPPRKRDLFSR).

This sequence belongs to the DsbB family.

It is found in the cell inner membrane. Required for disulfide bond formation in some periplasmic proteins. Acts by oxidizing the DsbA protein. In Sodalis glossinidius (strain morsitans), this protein is Disulfide bond formation protein B.